A 713-amino-acid chain; its full sequence is Nucleoporin NUP82 (713 aa).

An interaction with NUP116 region spans residues 1 to 409 (MSQSSRLSAL…SDLNPLAGLK (409 aa)). Residues 463–713 (TSISTEKSDT…VSQEFTTKTQ (251 aa)) are interaction with NSP1 and NUP159. Positions 582 to 713 (EAQNKKWDAQ…VSQEFTTKTQ (132 aa)) form a coiled coil. The Bipartite nuclear localization signal motif lies at 607–623 (KKLSQIAESNKFKEKKI).

In terms of assembly, component of the nuclear pore complex (NPC). NPC constitutes the exclusive means of nucleocytoplasmic transport. NPCs allow the passive diffusion of ions and small molecules and the active, nuclear transport receptor-mediated bidirectional transport of macromolecules such as proteins, RNAs, ribonucleoparticles (RNPs), and ribosomal subunits across the nuclear envelope. Due to its 8-fold rotational symmetry, all subunits are present with 8 copies or multiples thereof. NUP82 is part of the NUP82 subcomplex. This subcomplex is the base for interactions with NUP116 and GLE2, with NUP42 and GLE1 and with DYN2.

It is found in the nucleus. The protein localises to the nuclear pore complex. The protein resides in the nucleus membrane. Functions as a component of the nuclear pore complex (NPC). NPC components, collectively referred to as nucleoporins (NUPs), can play the role of both NPC structural components and of docking or interaction partners for transiently associated nuclear transport factors. It is specifically involved as part of the NUP82-NUP159-NSP1 subcomplex in nuclear mRNA and pre-ribosome export by acting as a linker tethering nucleoporins that are directly involved in nuclear transport to the NPC via its coiled-coil domain. This Saccharomyces cerevisiae (strain ATCC 204508 / S288c) (Baker's yeast) protein is Nucleoporin NUP82 (NUP82).